A 915-amino-acid chain; its full sequence is Alanine--tRNA ligase (915 aa).

Residues histidine 605, histidine 609, cysteine 709, and histidine 713 each contribute to the Zn(2+) site. Residues 882 to 901 are disordered; the sequence is GGGGDERLAQGGGRNPDGLT.

Belongs to the class-II aminoacyl-tRNA synthetase family. It depends on Zn(2+) as a cofactor.

It localises to the cytoplasm. It carries out the reaction tRNA(Ala) + L-alanine + ATP = L-alanyl-tRNA(Ala) + AMP + diphosphate. Its function is as follows. Catalyzes the attachment of alanine to tRNA(Ala) in a two-step reaction: alanine is first activated by ATP to form Ala-AMP and then transferred to the acceptor end of tRNA(Ala). Also edits incorrectly charged Ser-tRNA(Ala) and Gly-tRNA(Ala) via its editing domain. The polypeptide is Alanine--tRNA ligase (Methanopyrus kandleri (strain AV19 / DSM 6324 / JCM 9639 / NBRC 100938)).